Reading from the N-terminus, the 265-residue chain is Taurine import ATP-binding protein TauB (265 aa).

Residues 7–236 (QNLNMIFKTP…MGIDGDLREI (230 aa)) enclose the ABC transporter domain. Position 41 to 48 (41 to 48 (GPSGCGKT)) interacts with ATP.

The protein belongs to the ABC transporter superfamily. Taurine importer (TC 3.A.1.17.1) family. In terms of assembly, the complex is composed of two ATP-binding proteins (TauB), two transmembrane proteins (TauC) and a solute-binding protein (TauA).

It localises to the cell inner membrane. It catalyses the reaction taurine(out) + ATP + H2O = taurine(in) + ADP + phosphate + H(+). Part of the ABC transporter complex TauABC involved in taurine import. Responsible for energy coupling to the transport system. This is Taurine import ATP-binding protein TauB from Pelagibacter ubique (strain HTCC1062).